We begin with the raw amino-acid sequence, 537 residues long: Glutamyl-tRNA(Gln) amidotransferase subunit B, chloroplastic/mitochondrial (537 aa).

The protein belongs to the GatB/GatE family. GatB subfamily. As to quaternary structure, subunit of the heterotrimeric GatCAB amidotransferase (AdT) complex, composed of A, B and C subunits.

Its subcellular location is the mitochondrion. The protein localises to the plastid. It localises to the chloroplast. It catalyses the reaction L-glutamyl-tRNA(Gln) + L-glutamine + ATP + H2O = L-glutaminyl-tRNA(Gln) + L-glutamate + ADP + phosphate + H(+). In terms of biological role, allows the formation of correctly charged Gln-tRNA(Gln) through the transamidation of misacylated Glu-tRNA(Gln) in chloroplasts and mitochondria. The reaction takes place in the presence of glutamine and ATP through an activated gamma-phospho-Glu-tRNA(Gln). The protein is Glutamyl-tRNA(Gln) amidotransferase subunit B, chloroplastic/mitochondrial of Ostreococcus tauri.